We begin with the raw amino-acid sequence, 210 residues long: Somatotropin (210 aa).

A signal peptide spans 1–23 (MARVLVLLSVVLVSLLVNQGRAS). Histidine 38 serves as a coordination point for Zn(2+). Cysteines 71 and 183 form a disulfide. Zn(2+) is bound at residue glutamate 192. Cysteines 200 and 208 form a disulfide.

This sequence belongs to the somatotropin/prolactin family.

Its subcellular location is the secreted. Functionally, growth hormone plays an important role in growth control. This is Somatotropin (gh) from Cyprinus carpio (Common carp).